The following is a 123-amino-acid chain: MIQMQSTLDAADNSGARKVMCIKVLGGSHRRYAHIGDIIKVTVKEAIPRGKVKKGDVLKAVVVRTRKGVRRPDGSIIRFDRNACVLLNDTTEQPVGTRIFGPVTRELRNAKFMKIVSLAPEVL.

Belongs to the universal ribosomal protein uL14 family. Part of the 50S ribosomal subunit. Forms a cluster with proteins L3 and L19. In the 70S ribosome, L14 and L19 interact and together make contacts with the 16S rRNA in bridges B5 and B8.

Its function is as follows. Binds to 23S rRNA. Forms part of two intersubunit bridges in the 70S ribosome. The polypeptide is Large ribosomal subunit protein uL14 (Aliivibrio fischeri (strain ATCC 700601 / ES114) (Vibrio fischeri)).